Consider the following 403-residue polypeptide: Leu/Ile/Val-binding protein homolog 8 (403 aa).

The N-terminal stretch at 1–26 is a signal peptide; sequence MRLSRLLIGASLGVALSSTVFTAALA.

The protein belongs to the leucine-binding protein family.

Component of an amino-acid transport system. The polypeptide is Leu/Ile/Val-binding protein homolog 8 (Brucella abortus (strain 2308)).